The following is a 349-amino-acid chain: MLILGIESSCDETGVGIIELSDNGHMEIRADVVASSMEQHARFGGVVPEIASRAHLEAMPQVMKAALEEAGVEKPDAVAATVGPGLAGALLVGASAAKAFASAWGVPFYGVNHLGGHVAVANLEGEELPHSVALLVSGGHTQLLEVEAVGKPMKELGTTLDDAAGEAYDKVSRLLGLGYPGGPVIDKLAAQGKPTIDLPRGLSKAEDLRGPNRHNFSFSGLKTAVARHVEKAEREGTTVQVEDLCASFQEAVADVLTAKAVRACQDTGAKVLLLGGGVAANSRLRALAAKRCESAGIELRVPRFKLCTDNGVMIAAVAAQLIHEGAEPSGLACGTDTQLEVEVPLVAAR.

Fe cation-binding residues include H113 and H117. Residues 135 to 139 (LVSGG), D169, G182, D186, and N281 contribute to the substrate site. D309 is a Fe cation binding site.

Belongs to the KAE1 / TsaD family. Requires Fe(2+) as cofactor.

The protein resides in the cytoplasm. The catalysed reaction is L-threonylcarbamoyladenylate + adenosine(37) in tRNA = N(6)-L-threonylcarbamoyladenosine(37) in tRNA + AMP + H(+). Required for the formation of a threonylcarbamoyl group on adenosine at position 37 (t(6)A37) in tRNAs that read codons beginning with adenine. Is involved in the transfer of the threonylcarbamoyl moiety of threonylcarbamoyl-AMP (TC-AMP) to the N6 group of A37, together with TsaE and TsaB. TsaD likely plays a direct catalytic role in this reaction. This is tRNA N6-adenosine threonylcarbamoyltransferase from Corynebacterium aurimucosum (strain ATCC 700975 / DSM 44827 / CIP 107346 / CN-1) (Corynebacterium nigricans).